We begin with the raw amino-acid sequence, 576 residues long: Polyphenol oxidase 3 (576 aa).

Cu cation-binding residues include His-61, His-85, His-94, His-259, His-263, and His-296. The 2'-(S-cysteinyl)-histidine (Cys-His) cross-link spans 83-85 (CTH). Residue His-263 participates in substrate binding. The propeptide at 393–576 (FVTTQTENPA…ILDDIIHRVN (184 aa)) is removed in mature form.

Belongs to the tyrosinase family. In terms of assembly, tetramer composed of two subunits of PPO3 (H subunits) and two subunits of the as yet uncharacterized product of ORF239342 (L subunits). The cofactor is Cu(2+). In terms of processing, the C-ter is probably cleaved after Gly-392 since the mature active protein is smaller than the protein encoded by the gene.

The enzyme catalyses 2 L-dopa + O2 = 2 L-dopaquinone + 2 H2O. The catalysed reaction is L-tyrosine + O2 = L-dopaquinone + H2O. Copper-containing oxidase that catalyzes both the o-hydroxylation of monophenols and the subsequent oxidation of the resulting o-diphenols into reactive o-quinones, which evolve spontaneously to produce intermediates, which associate in dark brown pigments. Involved in the initial step of melanin synthesis. Melanins constitute a mechanism of defense and resistance to stress such as UV radiations, free radicals, gamma rays, dehydratation and extreme temperatures, and contribute to the fungal cell-wall resistance against hydrolytic enzymes in avoiding cellular lysis. Fungal pigments are also involved in the formation and stability of spores. The chain is Polyphenol oxidase 3 (PPO3) from Agaricus bisporus (White button mushroom).